Here is a 489-residue protein sequence, read N- to C-terminus: NADH-ubiquinone oxidoreductase chain 2 (489 aa).

13 helical membrane passes run 9-29 (LFPE…GVVF), 47-67 (LGLL…PLAV), 80-100 (FTYF…VMCL), 114-134 (IVLI…YDLI), 168-188 (FILG…IYGF), 216-236 (IFMG…AVPF), 248-268 (PTIV…ANML), 280-300 (WQQL…LAAM), 309-329 (LAYS…CGTI), 335-355 (LLIG…IVLA), 376-396 (ILAI…PLAG), 401-421 (FYLF…IGVV), and 459-479 (LAIT…LFLV).

It belongs to the complex I subunit 2 family.

It is found in the mitochondrion inner membrane. The catalysed reaction is a ubiquinone + NADH + 5 H(+)(in) = a ubiquinol + NAD(+) + 4 H(+)(out). Its function is as follows. Core subunit of the mitochondrial membrane respiratory chain NADH dehydrogenase (Complex I) that is believed to belong to the minimal assembly required for catalysis. Complex I functions in the transfer of electrons from NADH to the respiratory chain. The immediate electron acceptor for the enzyme is believed to be ubiquinone. The protein is NADH-ubiquinone oxidoreductase chain 2 (ND2) of Marchantia polymorpha (Common liverwort).